The sequence spans 306 residues: Bifunctional protein FolD 1 (306 aa).

Residues 170–172 (GRG), Thr-199, and Val-240 contribute to the NADP(+) site. A disordered region spans residues 285-306 (ARRTRSSRTPVRLPDSGAPAGR).

Belongs to the tetrahydrofolate dehydrogenase/cyclohydrolase family. In terms of assembly, homodimer.

The catalysed reaction is (6R)-5,10-methylene-5,6,7,8-tetrahydrofolate + NADP(+) = (6R)-5,10-methenyltetrahydrofolate + NADPH. It catalyses the reaction (6R)-5,10-methenyltetrahydrofolate + H2O = (6R)-10-formyltetrahydrofolate + H(+). It participates in one-carbon metabolism; tetrahydrofolate interconversion. Functionally, catalyzes the oxidation of 5,10-methylenetetrahydrofolate to 5,10-methenyltetrahydrofolate and then the hydrolysis of 5,10-methenyltetrahydrofolate to 10-formyltetrahydrofolate. This Salinispora tropica (strain ATCC BAA-916 / DSM 44818 / JCM 13857 / NBRC 105044 / CNB-440) protein is Bifunctional protein FolD 1.